Reading from the N-terminus, the 202-residue chain is Transmembrane 4 L6 family member 1 (202 aa).

Residues 1–9 (MCYVKCARY) are Cytoplasmic-facing. Residues 10 to 30 (IGYSLVWAAVFCIVANALLYF) traverse the membrane as a helical segment. The Extracellular portion of the chain corresponds to 31–49 (PNGETKYATEDHLSRFVWY). The chain crosses the membrane as a helical span at residues 50–70 (FAGIVGGGLLMLLPAFVFIGM). Residues 71–93 (DEEDCCGCCGYENYGKRCSMLSS) are Cytoplasmic-facing. A helical membrane pass occupies residues 94–114 (VLAALIGIVGSAYCVIVASLG). Topologically, residues 115-161 (LAEGPKCSDAHGVWNYTFASTEGQYLLNSSMWSKCYEPKHIVEWHVT) are extracellular. Asn-129 and Asn-142 each carry an N-linked (GlcNAc...) asparagine glycan. A helical transmembrane segment spans residues 162–182 (LFSILLAFAAVEFILCLIQVI). The Cytoplasmic segment spans residues 183 to 202 (NGMLGGLCGYCCSRQQQYNC).

The protein belongs to the L6 tetraspanin family. Present in high molecular weight complexes in tumor cells. Interacts with SDCBP2. As to expression, highly expressed in skin and lung. Moderately expressed in lymph nodes and kidneys. Also present in thymic stroma and fibroblasts.

It localises to the membrane. This Mus musculus (Mouse) protein is Transmembrane 4 L6 family member 1 (Tm4sf1).